The following is a 308-amino-acid chain: Quinolinate synthase (308 aa).

2 residues coordinate iminosuccinate: His-21 and Ser-38. Cys-83 is a [4Fe-4S] cluster binding site. Iminosuccinate-binding positions include 109-111 and Ser-126; that span reads YIN. Residue Cys-170 participates in [4Fe-4S] cluster binding. Iminosuccinate-binding positions include 196–198 and Thr-213; that span reads HPE. Cys-263 is a binding site for [4Fe-4S] cluster.

The protein belongs to the quinolinate synthase family. Type 2 subfamily. It depends on [4Fe-4S] cluster as a cofactor.

Its subcellular location is the cytoplasm. The enzyme catalyses iminosuccinate + dihydroxyacetone phosphate = quinolinate + phosphate + 2 H2O + H(+). The protein operates within cofactor biosynthesis; NAD(+) biosynthesis; quinolinate from iminoaspartate: step 1/1. Its function is as follows. Catalyzes the condensation of iminoaspartate with dihydroxyacetone phosphate to form quinolinate. The protein is Quinolinate synthase of Sulfurisphaera tokodaii (strain DSM 16993 / JCM 10545 / NBRC 100140 / 7) (Sulfolobus tokodaii).